The primary structure comprises 212 residues: 3-isopropylmalate dehydratase small subunit (212 aa).

This sequence belongs to the LeuD family. LeuD type 1 subfamily. As to quaternary structure, heterodimer of LeuC and LeuD.

The enzyme catalyses (2R,3S)-3-isopropylmalate = (2S)-2-isopropylmalate. It functions in the pathway amino-acid biosynthesis; L-leucine biosynthesis; L-leucine from 3-methyl-2-oxobutanoate: step 2/4. Functionally, catalyzes the isomerization between 2-isopropylmalate and 3-isopropylmalate, via the formation of 2-isopropylmaleate. The protein is 3-isopropylmalate dehydratase small subunit of Pseudomonas aeruginosa (strain LESB58).